We begin with the raw amino-acid sequence, 300 residues long: MEISQLLPKFKIEKIIKEWLEEDIPSFDYGGCVVGSDEKVAHLLGKQNGVFSGSIFFQEIFNQLGCKVIWFIKDGESFSMTHGPEKNKPQVLAHVIGPVRNILIGERLSLNILSRSCGITTQGYNVKKLVDGDNEQQQQQPWKGKIAGTRKTTPGFRLVEKLALLTAGLDTHRMDLSSMIMLKDNHIWACGNITNTVKNARSVGGFSLKIEVECRNQNEAIEAIEAGADIVMLDNFNPQDLQTVSTYLKQHYPHITLEASGGITSATIIQYAIPTIDIISMGNLTQGVPHIDISLKIQKQ.

Positions 5–9 (QLLPK) are important for hexamer formation. Quinolinate-binding positions include arginine 107, 150-151 (RK), 172-173 (HR), lysine 183, glutamate 213, aspartate 234, 260-262 (SGG), and glycine 282.

The protein belongs to the NadC/ModD family. Hexamer formed by 3 homodimers.

The catalysed reaction is nicotinate beta-D-ribonucleotide + CO2 + diphosphate = quinolinate + 5-phospho-alpha-D-ribose 1-diphosphate + 2 H(+). Its pathway is cofactor biosynthesis; NAD(+) biosynthesis; nicotinate D-ribonucleotide from quinolinate: step 1/1. Functionally, involved in the catabolism of quinolinic acid (QA). The chain is Nicotinate-nucleotide pyrophosphorylase [carboxylating] (qprt) from Dictyostelium discoideum (Social amoeba).